The sequence spans 140 residues: Tumor protein D55 (140 aa).

Residues 1-28 (MPHARTETSVGTYESHSTSELEDLTEPE) are disordered. The segment covering 7 to 18 (ETSVGTYESHST) has biased composition (polar residues). A coiled-coil region spans residues 28–57 (EQRELKTKLTKLEAEIVTLRHVLAAKERRC).

This sequence belongs to the TPD52 family. In terms of assembly, interacts with TPD52L2. As to expression, specifically expressed in testis. Expressed at 5.6-fold higher levels in adult testis than in fetal testis.

The chain is Tumor protein D55 (TPD52L3) from Homo sapiens (Human).